Reading from the N-terminus, the 511-residue chain is L-aspartate oxidase (511 aa).

FAD is bound by residues 16–19 (AGLA) and 48–55 (SSAWAQGG). The Proton donor/acceptor role is filled by Arg-282. FAD contacts are provided by residues Glu-365 and 381-382 (SL).

It belongs to the FAD-dependent oxidoreductase 2 family. NadB subfamily. Requires FAD as cofactor.

The protein localises to the cytoplasm. It carries out the reaction L-aspartate + O2 = iminosuccinate + H2O2. It participates in cofactor biosynthesis; NAD(+) biosynthesis; iminoaspartate from L-aspartate (oxidase route): step 1/1. In terms of biological role, catalyzes the oxidation of L-aspartate to iminoaspartate, the first step in the de novo biosynthesis of NAD(+). In Caulobacter vibrioides (strain ATCC 19089 / CIP 103742 / CB 15) (Caulobacter crescentus), this protein is L-aspartate oxidase (nadB).